A 170-amino-acid polypeptide reads, in one-letter code: Cytochrome b6-f complex subunit 4 (170 aa).

The next 3 membrane-spanning stretches (helical) occupy residues 46 to 66 (LLFM…GLSV), 105 to 125 (LLGI…PFIE), and 141 to 161 (TVFL…TLPL).

Belongs to the cytochrome b family. PetD subfamily. In terms of assembly, the 4 large subunits of the cytochrome b6-f complex are cytochrome b6, subunit IV (17 kDa polypeptide, PetD), cytochrome f and the Rieske protein, while the 4 small subunits are PetG, PetL, PetM and PetN. The complex functions as a dimer.

It is found in the cellular thylakoid membrane. Component of the cytochrome b6-f complex, which mediates electron transfer between photosystem II (PSII) and photosystem I (PSI), cyclic electron flow around PSI, and state transitions. This is Cytochrome b6-f complex subunit 4 from Synechococcus sp. (strain JA-2-3B'a(2-13)) (Cyanobacteria bacterium Yellowstone B-Prime).